We begin with the raw amino-acid sequence, 303 residues long: Glutamyl-Q tRNA(Asp) synthetase (303 aa).

Residues Arg-9–Ser-13 and Glu-45 contribute to the L-glutamate site. Positions Pro-12–Asn-22 match the 'HIGH' region motif. Zn(2+) contacts are provided by Cys-100, Cys-102, Tyr-125, and Cys-129. Positions 184 and 202 each coordinate L-glutamate. Residues Arg-240–Arg-244 carry the 'KMSKS' region motif. An ATP-binding site is contributed by Lys-243.

This sequence belongs to the class-I aminoacyl-tRNA synthetase family. GluQ subfamily. Requires Zn(2+) as cofactor.

Functionally, catalyzes the tRNA-independent activation of glutamate in presence of ATP and the subsequent transfer of glutamate onto a tRNA(Asp). Glutamate is transferred on the 2-amino-5-(4,5-dihydroxy-2-cyclopenten-1-yl) moiety of the queuosine in the wobble position of the QUC anticodon. This is Glutamyl-Q tRNA(Asp) synthetase from Deinococcus geothermalis (strain DSM 11300 / CIP 105573 / AG-3a).